We begin with the raw amino-acid sequence, 581 residues long: Prolactin receptor (581 aa).

An N-terminal signal peptide occupies residues 1–24; that stretch reads MKENAASRVLFILLLFLFASLLNG. At 25-237 the chain is on the extracellular side; the sequence is QSPPEKPKLI…NDFPVKDTSM (213 aa). 2 consecutive Fibronectin type-III domains span residues 27 to 127 and 129 to 229; these read PPEK…IVEP and PPVN…IPND. Residues Cys-36 and Cys-46 are joined by a disulfide bond. Residue Asn-59 is glycosylated (N-linked (GlcNAc...) asparagine). Cysteines 75 and 86 form a disulfide. N-linked (GlcNAc...) asparagine glycosylation occurs at Asn-132. The Zn(2+) site is built by Asp-211 and His-212. Positions 215 to 219 match the WSXWS motif motif; the sequence is WSEWS. Residues 238-258 form a helical membrane-spanning segment; the sequence is WIFVGVLSAVICLIMVWAVAL. Over 259–581 the chain is Cytoplasmic; sequence KGYSMVTCIL…SAKKAPPALP (323 aa). Residues 267-275 carry the Box 1 motif motif; it reads ILPPVPGPK. Basic and acidic residues-rich tracts occupy residues 323–349 and 375–388; these read QHLM…DTDS and HIPE…DPET. Disordered regions lie at residues 323–388 and 462–492; these read QHLM…DPET and FKPS…PDQD.

The protein belongs to the type I cytokine receptor family. Type 1 subfamily. In terms of assembly, interacts with SMARCA1. Interacts with NEK3 and VAV2 and this interaction is prolactin-dependent. As to expression, expressed in all tissues examined; liver, pituitary, adrenal gland, ovary and fetal liver.

The protein localises to the membrane. Functionally, this is a receptor for the anterior pituitary hormone prolactin. The chain is Prolactin receptor (PRLR) from Ovis aries (Sheep).